The chain runs to 416 residues: Isobutyryl-CoA dehydrogenase, mitochondrial (416 aa).

The transit peptide at 1–21 (MISGLFKLSNKQSVLQNATKL) directs the protein to the mitochondrion. FAD is bound by residues 156-165 (YCLTEPGSGS) and 189-191 (FIS). Ser165 contacts substrate. A substrate-binding site is contributed by 273–276 (NGGR). FAD contacts are provided by residues Arg301, 311–312 (FQ), and 370–374 (QLFGG). Glu397 serves as the catalytic Proton acceptor. 399-401 (SDA) provides a ligand contact to FAD. Position 409 (Arg409) interacts with substrate.

Belongs to the acyl-CoA dehydrogenase family. Homotetramer. The cofactor is FAD.

The protein resides in the mitochondrion. The enzyme catalyses 2-methylpropanoyl-CoA + oxidized [electron-transfer flavoprotein] + H(+) = 2-methylpropenoyl-CoA + reduced [electron-transfer flavoprotein]. It catalyses the reaction (2S)-2-methylbutanoyl-CoA + oxidized [electron-transfer flavoprotein] + H(+) = (2E)-2-methylbut-2-enoyl-CoA + reduced [electron-transfer flavoprotein]. It carries out the reaction propanoyl-CoA + oxidized [electron-transfer flavoprotein] + H(+) = acryloyl-CoA + reduced [electron-transfer flavoprotein]. It functions in the pathway amino-acid degradation; L-valine degradation. Its function is as follows. Isobutyryl-CoA dehydrogenase which catalyzes one of the steps of the valine catabolic pathway. To a lesser extent, is also able to catalyze the oxidation of (2S)-2-methylbutanoyl-CoA. The chain is Isobutyryl-CoA dehydrogenase, mitochondrial (acad8) from Dictyostelium discoideum (Social amoeba).